The sequence spans 293 residues: MAGRYAPSPSGDLHFGNLRTALLAWLFARSEGKKFLMRVEDIDEQRSSKESAESQLADLSALGLDWDGDVLYQSTRYDAYRAALEKLDTYECYCSRRDIQEASRAPHVAPGVYPGTCRGLKEEERVEKRATLAAQNRHPAIRLRAQVTSFDFHDRLRGPQTGPVDDFILLRGGQEPGWAYNLAVVVDDAYQGVDQVVRGDDLLDSAARQAYLGSLLGTPAPEYIHVPLVLNAHGQRLAKRDGAVTLKEMLIDAPLHTIFSRLASSLGYEGVNSAPQLLEIFDPTTLSREPFIY.

L-glutamate contacts are provided by residues 4–8 and glutamate 40; that span reads RYAPS. Residues 7–17 carry the 'HIGH' region motif; it reads PSPSGDLHFGN. Residues cysteine 92, cysteine 94, tyrosine 113, and cysteine 117 each coordinate Zn(2+). Positions 180 and 198 each coordinate L-glutamate. The short motif at 236–240 is the 'KMSKS' region element; that stretch reads RLAKR. Position 239 (lysine 239) interacts with ATP.

Belongs to the class-I aminoacyl-tRNA synthetase family. GluQ subfamily. Requires Zn(2+) as cofactor.

Functionally, catalyzes the tRNA-independent activation of glutamate in presence of ATP and the subsequent transfer of glutamate onto a tRNA(Asp). Glutamate is transferred on the 2-amino-5-(4,5-dihydroxy-2-cyclopenten-1-yl) moiety of the queuosine in the wobble position of the QUC anticodon. The sequence is that of Glutamyl-Q tRNA(Asp) synthetase from Corynebacterium glutamicum (strain ATCC 13032 / DSM 20300 / JCM 1318 / BCRC 11384 / CCUG 27702 / LMG 3730 / NBRC 12168 / NCIMB 10025 / NRRL B-2784 / 534).